A 203-amino-acid polypeptide reads, in one-letter code: Guanylate kinase (203 aa).

One can recognise a Guanylate kinase-like domain in the interval Gly3–Thr181. Ala10 to Thr17 provides a ligand contact to ATP.

Belongs to the guanylate kinase family.

The protein localises to the cytoplasm. The catalysed reaction is GMP + ATP = GDP + ADP. Its function is as follows. Essential for recycling GMP and indirectly, cGMP. This is Guanylate kinase from Alkalilimnicola ehrlichii (strain ATCC BAA-1101 / DSM 17681 / MLHE-1).